A 74-amino-acid chain; its full sequence is Apolipoprotein C-I, acidic form (74 aa).

An N-terminal signal peptide occupies residues 1–26 (MRLFLSLPVLVVVLSMVLEGPTPAQG).

Belongs to the apolipoprotein C1 family.

It is found in the secreted. This Colobus guereza (Mantled guereza) protein is Apolipoprotein C-I, acidic form (APOC1A).